Consider the following 295-residue polypeptide: Probable ketoamine kinase slr1563 (295 aa).

Position 99 to 101 (99 to 101 (EWL)) interacts with ATP. The active-site Proton acceptor is the Asp-201.

This sequence belongs to the fructosamine kinase family.

In terms of biological role, ketoamine kinase that phosphorylates ketoamines on the third carbon of the sugar moiety to generate ketoamine 3-phosphate. In Synechocystis sp. (strain ATCC 27184 / PCC 6803 / Kazusa), this protein is Probable ketoamine kinase slr1563.